The following is a 546-amino-acid chain: MTPKEFKRLYRIITILLEQGIDELVPARYQPWPGRLARRSLFWLKKKQPDLSRGARIRLAFEALGPIFIKFGQMLSTRRDLLPPDIAEELAMLQDRVPPFCGQAARLKIEESLGCPVETLFDDFDETPLASASIAQVHTGRLKENGREIVIKVIRPDIEPVIEADLRLMQTLARLVARFVPQSARLRPIEVVEEYRKTILDELNLMREAANAIQLRRNFTGSDALYVPEVFTEHCREHVLVMERIYGIPVSDIPALEANGTNMKLLAERGVEVFFTQVFRDSFFHADMHPGNIFVSYEHPDNPLWIGIDCGIVGTLNREDKRYLAENFLAFFNRDYRRVAELHVESGWVPPDTKVDEFEFAIRTVLEPIFEKPLSEISFGHVLLNLFNTARRFNMAVQPQLVLLQKTLLYVEGLGRQLYPQLDLWQTAKPYLENWMHEQVGPKAVWNAIKEKAPFWAEKLPELPELVYETLRQTRHQQRHFDQMFADFRRHSRRQGQARYLLGVGASLLLVGVFLLTQKQHIEWGQISLAGAGLCWLLGWFKARSH.

In terms of domain architecture, Protein kinase spans 123 to 501 (DFDETPLASA…SRRQGQARYL (379 aa)). ATP contacts are provided by residues 129 to 137 (LASASIAQV) and K152. The active-site Proton acceptor is the D287. 2 helical membrane passes run 496-516 (GQARYLLGVGASLLLVGVFLL) and 521-541 (HIEWGQISLAGAGLCWLLGWF).

This sequence belongs to the ABC1 family. UbiB subfamily.

It localises to the cell inner membrane. It functions in the pathway cofactor biosynthesis; ubiquinone biosynthesis [regulation]. Functionally, is probably a protein kinase regulator of UbiI activity which is involved in aerobic coenzyme Q (ubiquinone) biosynthesis. This is Probable protein kinase UbiB from Aeromonas salmonicida (strain A449).